Reading from the N-terminus, the 138-residue chain is uncharacterized protein (138 aa).

3 consecutive transmembrane segments (helical) span residues 12–32 (LHFL…VLPI), 62–82 (LIAV…FSVL), and 111–131 (FHWV…LICS).

The protein localises to the cell membrane. This is an uncharacterized protein from Haemophilus influenzae (strain ATCC 51907 / DSM 11121 / KW20 / Rd).